A 68-amino-acid chain; its full sequence is Conotoxin Lp5.2 (68 aa).

A signal peptide spans 1 to 19 (MRCVPVFIILLLLASPAAP). The propeptide occupies 20–54 (KSLETRIQNDLIRAGLTDADLKTEKGFLSGLLNVA).

The protein belongs to the conotoxin T superfamily. Contains 2 disulfide bonds that can be either 'C1-C3, C2-C4' or 'C1-C4, C2-C3', since these disulfide connectivities have been observed for conotoxins with cysteine framework V (for examples, see AC P0DQQ7 and AC P81755). In terms of tissue distribution, expressed by the venom duct.

The protein localises to the secreted. This is Conotoxin Lp5.2 from Conus leopardus (Leopard cone).